Here is a 376-residue protein sequence, read N- to C-terminus: 1-acyl-sn-glycerol-3-phosphate acyltransferase gamma (376 aa).

Residues 1–124 (MGLLAFLKTQ…LGSSKVLAKK (124 aa)) are Cytoplasmic-facing. Residues 96-101 (HNFEID) carry the HXXXXD motif motif. The helical transmembrane segment at 125–145 (ELLYVPLIGWTWYFLEIVFCK) threads the bilayer. The Lumenal segment spans residues 146–316 (RKWEEDRDTV…TLLNFLSWAT (171 aa)). The chain crosses the membrane as a helical span at residues 317–339 (ILLSPLFSFVLGVFASGSPLLIL). The Cytoplasmic portion of the chain corresponds to 340–376 (TFLGFVGAASFGVRRLIGVTEIEKGSSYGNQEFKKKE).

The protein belongs to the 1-acyl-sn-glycerol-3-phosphate acyltransferase family.

It is found in the endoplasmic reticulum membrane. The protein localises to the nucleus envelope. The enzyme catalyses a 1-acyl-sn-glycero-3-phosphate + an acyl-CoA = a 1,2-diacyl-sn-glycero-3-phosphate + CoA. It catalyses the reaction pentadecanoyl-CoA + 1-(9Z-octadecenoyl)-sn-glycero-3-phosphate = 1-(9Z)-octadecenoyl-2-pentadecanoyl-sn-glycero-3-phosphate + CoA. It carries out the reaction heptadecanoyl-CoA + 1-(9Z-octadecenoyl)-sn-glycero-3-phosphate = 1-(9Z)-octadecenoyl-2-heptadecanoyl-sn-glycero-3-phosphate + CoA. The catalysed reaction is 1-(9Z-octadecenoyl)-sn-glycero-3-phosphate + octadecanoyl-CoA = 1-(9Z-octadecenoyl)-2-octadecanoyl-sn-glycero-3-phosphate + CoA. The enzyme catalyses nonadecanoyl-CoA + 1-(9Z-octadecenoyl)-sn-glycero-3-phosphate = 1-(9Z)-octadecenoyl-2-nonadecanoyl-sn-glycero-3-phosphate + CoA. It catalyses the reaction 1-(9Z-octadecenoyl)-sn-glycero-3-phosphate + (5Z,8Z,11Z,14Z)-eicosatetraenoyl-CoA = 1-(9Z)-octadecenoyl-2-(5Z,8Z,11Z,14Z)-eicosatetraenoyl-sn-glycero-3-phosphate + CoA. It carries out the reaction 1-(9Z-octadecenoyl)-sn-glycero-3-phosphate + (9Z)-octadecenoyl-CoA = 1,2-di-(9Z-octadecenoyl)-sn-glycero-3-phosphate + CoA. The catalysed reaction is 1-(9Z-octadecenoyl)-sn-glycero-3-phosphate + (9Z,12Z)-octadecadienoyl-CoA = 1-(9Z)-octadecenoyl-2-(9Z,12Z)-octadecadienoyl-sn-glycero-3-phosphate + CoA. The enzyme catalyses 1-(9Z-octadecenoyl)-sn-glycero-3-phosphocholine + (5Z,8Z,11Z,14Z)-eicosatetraenoyl-CoA = 1-(9Z)-octadecenoyl-2-(5Z,8Z,11Z,14Z)-icosatetraenoyl-sn-glycero-3-phosphocholine + CoA. It catalyses the reaction 1-(9Z-octadecenoyl)-sn-glycero-3-phospho-(1D-myo-inositol) + (5Z,8Z,11Z,14Z)-eicosatetraenoyl-CoA = 1-(9Z-octadecenoyl)-2-(5Z,8Z,11Z,14Z-eicosatetraenoyl)-sn-glycero-3-phospho-1D-myo-inositol + CoA. It carries out the reaction 1-(9Z-octadecenoyl)-sn-glycero-3-phospho-L-serine + (5Z,8Z,11Z,14Z)-eicosatetraenoyl-CoA = 1-(9Z-octadecenoyl)-2-(5Z,8Z,11Z,14Z-eicosatetraenoyl)-sn-glycero-3-phospho-L-serine + CoA. The catalysed reaction is 1-hexadecanoyl-sn-glycero-3-phosphate + (9Z)-octadecenoyl-CoA = 1-hexadecanoyl-2-(9Z-octadecenoyl)-sn-glycero-3-phosphate + CoA. The enzyme catalyses 1-hexadecanoyl-sn-glycero-3-phosphate + (5Z,8Z,11Z,14Z)-eicosatetraenoyl-CoA = 1-hexadecanoyl-2-(5Z,8Z,11Z,14Z-eicosatetraenoyl)-sn-glycero-3-phosphate + CoA. It catalyses the reaction 1-heptadecanoyl-sn-glycero-3-phosphate + (5Z,8Z,11Z,14Z)-eicosatetraenoyl-CoA = 1-heptadecanoyl-2-(5Z,8Z,11Z,14Z)-eicosatetraenoyl-sn-glycero-3-phosphate + CoA. It carries out the reaction 1-octadecanoyl-sn-glycero-3-phosphate + (9Z)-octadecenoyl-CoA = 1-octadecanoyl-2-(9Z-octadecenoyl)-sn-glycero-3-phosphate + CoA. The catalysed reaction is 1-octadecanoyl-sn-glycero-3-phosphate + (5Z,8Z,11Z,14Z)-eicosatetraenoyl-CoA = 1-octadecanoyl-2-(5Z,8Z,11Z,14Z-eicosatetraenoyl)-sn-glycero-3-phosphate + CoA. The enzyme catalyses 1-(9Z-octadecenoyl)-sn-glycero-3-phosphate + hexadecanoyl-CoA = 1-hexadecanoyl-2-(9Z-octadecenoyl)-sn-glycero-3-phosphate + CoA. It catalyses the reaction 1-O-(9Z-octadecenyl)-sn-glycero-3-phosphate + (5Z,8Z,11Z,14Z)-eicosatetraenoyl-CoA = 1-O-(9Z-octadecenyl)-2-(5Z,8Z,11Z,14Z-eicosatetraenoyl)-sn-glycero-3-phosphate + CoA. It carries out the reaction a 1-acyl-sn-glycero-3-phospho-(1D-myo-inositol) + (5Z,8Z,11Z,14Z)-eicosatetraenoyl-CoA = a 1-acyl-2-(5Z,8Z,11Z,14Z-eicosatetraenoyl)-sn-glycero-3-phospho-(1D-myo-inositol) + CoA. It functions in the pathway phospholipid metabolism; CDP-diacylglycerol biosynthesis; CDP-diacylglycerol from sn-glycerol 3-phosphate: step 2/3. Functionally, converts 1-acyl-sn-glycerol-3-phosphate (lysophosphatidic acid or LPA) into 1,2-diacyl-sn-glycerol-3-phosphate (phosphatidic acid or PA) by incorporating an acyl moiety at the sn-2 position of the glycerol backbone. Acts on LPA containing saturated or unsaturated fatty acids C16:0-C20:4 at the sn-1 position using C18:1, C20:4 or C18:2-CoA as the acyl donor. Also acts on lysophosphatidylcholine, lysophosphatidylinositol and lysophosphatidylserine using C18:1 or C20:4-CoA. Has a preference for arachidonoyl-CoA as a donor. Also has a modest lysophosphatidylinositol acyltransferase (LPIAT) activity, converts lysophosphatidylinositol (LPI) into phosphatidylinositol. The chain is 1-acyl-sn-glycerol-3-phosphate acyltransferase gamma (AGPAT3) from Pongo abelii (Sumatran orangutan).